Reading from the N-terminus, the 188-residue chain is dCTP deaminase (188 aa).

Residues 111-116 (KSTYAR), 135-137 (TLE), Gln-156, Tyr-170, and Gln-180 each bind dCTP. The active-site Proton donor/acceptor is Glu-137.

The protein belongs to the dCTP deaminase family. As to quaternary structure, homotrimer.

It catalyses the reaction dCTP + H2O + H(+) = dUTP + NH4(+). The protein operates within pyrimidine metabolism; dUMP biosynthesis; dUMP from dCTP (dUTP route): step 1/2. Catalyzes the deamination of dCTP to dUTP. This chain is dCTP deaminase, found in Neisseria meningitidis serogroup C / serotype 2a (strain ATCC 700532 / DSM 15464 / FAM18).